The primary structure comprises 286 residues: MSADAPVWIDEVFEDRVRYGLRGQILWEETSPFQKITIVDTEHYGRGLLLDDCWMTAERCEVCYHEYLVHPPLTTAASIARVLVIGGGDGGTVREVLRYAEVEQVDLVEIDGRVVELSQEYLGAIGTAWADPRLNVKIGDGIAFVQTAPDASYDVILVDGSDPAGPAAGLFNREFYENCRRVLKPGGVFASQAESPDSFLAVHLEMIETLSAVFAEAKPYYGWVPMYPSGWWSWLYASDTPGQFQKPQSDRLAAIEPQVEIYNRDIHQAAFAQPNFVRRGLSARQG.

Residues 6 to 239 (PVWIDEVFED…GWWSWLYASD (234 aa)) form the PABS domain. Q34 is a binding site for S-methyl-5'-thioadenosine. The spermidine site is built by H65 and D89. S-methyl-5'-thioadenosine is bound by residues E109 and 140 to 141 (DG). D159 serves as the catalytic Proton acceptor. 159–162 (DGSD) provides a ligand contact to spermidine. P166 lines the S-methyl-5'-thioadenosine pocket.

Belongs to the spermidine/spermine synthase family. In terms of assembly, homodimer or homotetramer. Homodimer.

The protein resides in the cytoplasm. The catalysed reaction is S-adenosyl 3-(methylsulfanyl)propylamine + putrescine = S-methyl-5'-thioadenosine + spermidine + H(+). Its pathway is amine and polyamine biosynthesis; spermidine biosynthesis; spermidine from putrescine: step 1/1. Catalyzes the irreversible transfer of a propylamine group from the amino donor S-adenosylmethioninamine (decarboxy-AdoMet) to putrescine (1,4-diaminobutane) to yield spermidine. This is Polyamine aminopropyltransferase from Synechococcus elongatus (strain ATCC 33912 / PCC 7942 / FACHB-805) (Anacystis nidulans R2).